The primary structure comprises 183 residues: Bifunctional protein PyrR (183 aa).

The PRPP-binding motif lies at 102–114 (VVLVDDVLYTGRT).

The protein belongs to the purine/pyrimidine phosphoribosyltransferase family. PyrR subfamily. As to quaternary structure, homodimer and homohexamer; in equilibrium.

It carries out the reaction UMP + diphosphate = 5-phospho-alpha-D-ribose 1-diphosphate + uracil. Its function is as follows. Regulates transcriptional attenuation of the pyrimidine nucleotide (pyr) operon by binding in a uridine-dependent manner to specific sites on pyr mRNA. This disrupts an antiterminator hairpin in the RNA and favors formation of a downstream transcription terminator, leading to a reduced expression of downstream genes. In terms of biological role, also displays a weak uracil phosphoribosyltransferase activity which is not physiologically significant. In Listeria welshimeri serovar 6b (strain ATCC 35897 / DSM 20650 / CCUG 15529 / CIP 8149 / NCTC 11857 / SLCC 5334 / V8), this protein is Bifunctional protein PyrR.